Here is a 543-residue protein sequence, read N- to C-terminus: Gap junction alpha-10 protein (543 aa).

Residues 1–16 lie on the Cytoplasmic side of the membrane; the sequence is MGDWNLLGGILEEVHS. A helical membrane pass occupies residues 17–37; it reads HSTIVGKIWLTILFIFRMLVL. Over 38-76 the chain is Extracellular; the sequence is RVAAEDVWDDEQSAFACNTRQPGCNNICYDDAFPISLIR. The chain crosses the membrane as a helical span at residues 77 to 97; the sequence is FWVLQIIFVSSPSLVYMGHAL. The Cytoplasmic segment spans residues 98-165; it reads YRLRAFEKDR…TYVLHILTRS (68 aa). A helical membrane pass occupies residues 166-186; it reads VLEVGFMIGQYILYGFQMHPL. The Extracellular portion of the chain corresponds to 187–209; that stretch reads YKCTQPPCPNAVDCFVSRPTEKT. A helical transmembrane segment spans residues 210 to 230; sequence IFMLFMHSIAAISLLLNILEI. Residues 231–543 lie on the Cytoplasmic side of the membrane; the sequence is FHLGIRKIMR…HSIHSVKFNS (313 aa). Disordered stretches follow at residues 306–359 and 379–424; these read PQPR…SSFG and PSFA…DRSR. Residues 317–328 show a composition bias toward basic and acidic residues; it reads NGKKDWSEKDQH. Residues 344–359 show a composition bias toward polar residues; that stretch reads AGNQHLGQQSDHSSFG. Basic and acidic residues predominate over residues 400 to 413; it reads TDLHSHCRDSEGSM.

Belongs to the connexin family. Alpha-type (group II) subfamily. In terms of assembly, a connexon is composed of a hexamer of connexins. Expressed in skeletal muscle and heart.

It localises to the cell membrane. It is found in the cell junction. The protein resides in the gap junction. One gap junction consists of a cluster of closely packed pairs of transmembrane channels, the connexons, through which materials of low MW diffuse from one cell to a neighboring cell. Involved in tracer coupling between horizontal cells of the retina. May play a role in the regulation of horizontal cell patterning. This is Gap junction alpha-10 protein (GJA10) from Homo sapiens (Human).